The chain runs to 362 residues: 3-dehydroquinate synthase (362 aa).

Residues 71 to 76 (DGEQYK), 105 to 109 (GVVGD), 129 to 130 (TT), Lys142, Lys151, and 169 to 172 (CLKT) each bind NAD(+). Positions 184, 247, and 264 each coordinate Zn(2+).

This sequence belongs to the sugar phosphate cyclases superfamily. Dehydroquinate synthase family. It depends on Co(2+) as a cofactor. Requires Zn(2+) as cofactor. The cofactor is NAD(+).

Its subcellular location is the cytoplasm. It carries out the reaction 7-phospho-2-dehydro-3-deoxy-D-arabino-heptonate = 3-dehydroquinate + phosphate. The protein operates within metabolic intermediate biosynthesis; chorismate biosynthesis; chorismate from D-erythrose 4-phosphate and phosphoenolpyruvate: step 2/7. Functionally, catalyzes the conversion of 3-deoxy-D-arabino-heptulosonate 7-phosphate (DAHP) to dehydroquinate (DHQ). The polypeptide is 3-dehydroquinate synthase (Shigella dysenteriae serotype 1 (strain Sd197)).